The sequence spans 361 residues: Membrane-bound lytic murein transglycosylase B (361 aa).

An N-terminal signal peptide occupies residues M1 to A18. C19 carries the N-palmitoyl cysteine lipid modification. C19 carries S-diacylglycerol cysteine lipidation. E162 is an active-site residue.

As to quaternary structure, monomer.

The protein localises to the cell outer membrane. It catalyses the reaction Exolytic cleavage of the (1-&gt;4)-beta-glycosidic linkage between N-acetylmuramic acid (MurNAc) and N-acetylglucosamine (GlcNAc) residues in peptidoglycan, from either the reducing or the non-reducing ends of the peptidoglycan chains, with concomitant formation of a 1,6-anhydrobond in the MurNAc residue.. Murein-degrading enzyme. Catalyzes the cleavage of the glycosidic bonds between N-acetylmuramic acid and N-acetylglucosamine residues in peptidoglycan. May play a role in recycling of muropeptides during cell elongation and/or cell division. The chain is Membrane-bound lytic murein transglycosylase B (mltB) from Escherichia coli (strain K12).